Consider the following 423-residue polypeptide: Putative gustatory receptor 97a (423 aa).

Over 1–31 the chain is Cytoplasmic; the sequence is MRFLRRQTRRLRSIWQRSLPVRFRRGKLHTQ. The chain crosses the membrane as a helical span at residues 32–52; that stretch reads LVTICLYATVFLNILYGVYLG. At 53-65 the chain is on the extracellular side; sequence RFSFRRKKFVFSK. A helical membrane pass occupies residues 66-86; it reads GLTIYSLFVATFFALFYIWNI. At 87–99 the chain is on the cytoplasmic side; the sequence is YNEISTGQINLRD. A helical membrane pass occupies residues 100 to 120; the sequence is TIGIYCYMNVCVCLFNYVTQW. The Extracellular segment spans residues 121–152; the sequence is EKTLQIIRFQNSVPLFKVLDSLDISAMIVWRA. A helical membrane pass occupies residues 153–173; that stretch reads FIYGLLKIVFCPLITYITLIL. Residues 174–200 are Cytoplasmic-facing; it reads YHRRSISESQWTSVTTTKTMLPLIVSN. The chain crosses the membrane as a helical span at residues 201–221; that stretch reads QINNCFFGGLVLANLIFAAVN. At 222–278 the chain is on the extracellular side; the sequence is RKLHGIVKEANMLQSPVQMNLHKPYYRMRRFCELADLLDELARKYGFTASRSKNYLR. Residues 279 to 299 form a helical membrane-spanning segment; it reads FTDWSMVLSMLMNLLGITMGC. At 300–317 the chain is on the cytoplasmic side; it reads YNQYLAIADHYINEEPFD. Residues 318–338 traverse the membrane as a helical segment; that stretch reads LFLAIVLVVFLAVPFLELVMV. At 339–423 the chain is on the extracellular side; sequence ARISNQTLTR…SDLTLRFSLK (85 aa). Residues N343 and N393 are each glycosylated (N-linked (GlcNAc...) asparagine).

The protein belongs to the insect chemoreceptor superfamily. Gustatory receptor (GR) family. Gr22e subfamily. In larvae, is expressed in neurons of the terminal external chemosensory organ.

It is found in the cell membrane. In terms of biological role, probable gustatory receptor which mediates acceptance or avoidance behavior, depending on its substrates. The chain is Putative gustatory receptor 97a (Gr97a) from Drosophila melanogaster (Fruit fly).